The chain runs to 132 residues: Probable prefoldin subunit 4 (132 aa).

This sequence belongs to the prefoldin subunit beta family. Heterohexamer of two PFD-alpha type and four PFD-beta type subunits.

Functionally, binds specifically to cytosolic chaperonin (c-CPN) and transfers target proteins to it. Binds to nascent polypeptide chain and promotes folding in an environment in which there are many competing pathways for nonnative proteins. This chain is Probable prefoldin subunit 4 (pfdn4), found in Dictyostelium discoideum (Social amoeba).